A 484-amino-acid polypeptide reads, in one-letter code: Transcription factor MYB88 (484 aa).

Residues 1–20 are disordered; sequence MEETTKQNNMKKKKKILLHS. A Nuclear localization signal motif is present at residues 13-20; the sequence is KKKILLHS. HTH myb-type domains lie at 25–76 and 77–131; these read KKER…YTYL and NSDF…KKRA. 2 DNA-binding regions (H-T-H motif) span residues 53–76 and 104–127; these read WAII…YTYL and WTEI…TTLC. Disordered stretches follow at residues 215-241, 321-383, and 458-484; these read NATS…DKSN, RSSN…GGEL, and GVES…LDSL. Basic and acidic residues predominate over residues 232-241; that stretch reads KESDGEDKSN. The segment covering 339-348 has biased composition (low complexity); the sequence is SPASSEYSSG. Residues 354 to 380 are compositionally biased toward polar residues; the sequence is TIMTHPSGDKTQQLMSDTQTTSHQQNG. Pro residues predominate over residues 463–476; the sequence is SPYPSANPSQPPPC.

Interacts with RBR1. In terms of tissue distribution, expressed at low levels in all organs including roots, leaves, hypocotyls stems, flowers, siliques and buds.

The protein resides in the nucleus. Its function is as follows. Transcription factor that binds to DNA in promoters cis-regulatory element 5'-GGCGCGC-3' of cell cycle genes, including cyclins, cyclin-dependent kinases (CDKs), and components of the pre-replication complex. Binds to DNA in promoters cis-regulatory element 5'-AGCCG-3' of auxin regulated genes (e.g. PIN3 and PIN7). Together with FAMA and MYB124, ensures that stomata contain just two guard cells (GCs) by enforcing a single symmetric precursor cell division before stomatal maturity. Represses the expression of the mitosis-inducing factors CDKB1-1 and CDKA-1, specifically required for the last guard mother cells (GMC) symmetric divisions in the stomatal pathway. Represses CYCA2-3 in newly formed guard cells. Together with MYB88, regulates stomata spacing by restricting divisions late in the stomatal cell lineage thus limiting the number of GMC divisions. In collaboration with CDKB1-1 and CDKB1-2, restrict the G1/S transition and chloroplast and nuclear number during stomatal formation, and normally maintain fate and developmental progression throughout the stomatal cell lineage. Involved in sensing and/or transducing abiotic stress (e.g. drought and salt), probably via the positive regulation of NAC019. Regulates female reproduction being required for entry into megasporogenesis, probably via the regulation of cell cycle genes. Plays a minor role in lateral roots (LRs) initiation. Involved complementarily in establishing the gravitropic set-point angles of lateral roots by regulating the transcription of PIN3 and PIN7 in gravity-sensing cells of primary and lateral roots. In Arabidopsis thaliana (Mouse-ear cress), this protein is Transcription factor MYB88.